The chain runs to 90 residues: Mitochondrial import inner membrane translocase subunit Tim10 (90 aa).

A Twin CX3C motif motif is present at residues 29 to 54 (CHRKCVPPHYKEAELSKGESVCLDRC). 2 disulfide bridges follow: cysteine 29-cysteine 54 and cysteine 33-cysteine 50.

Belongs to the small Tim family. In terms of assembly, heterohexamer; composed of 3 copies of TIMM9 and 3 copies of TIMM10/TIM10A, named soluble 70 kDa complex. The complex forms a 6-bladed alpha-propeller structure and associates with the TIMM22 component of the TIM22 complex. Interacts with multi-pass transmembrane proteins in transit. Also forms a complex composed of TIMM9, TIMM10/TIM10A and FXC1/TIM10B.

The protein localises to the mitochondrion inner membrane. In terms of biological role, mitochondrial intermembrane chaperone that participates in the import and insertion of multi-pass transmembrane proteins into the mitochondrial inner membrane. May also be required for the transfer of beta-barrel precursors from the TOM complex to the sorting and assembly machinery (SAM complex) of the outer membrane. Acts as a chaperone-like protein that protects the hydrophobic precursors from aggregation and guide them through the mitochondrial intermembrane space. This is Mitochondrial import inner membrane translocase subunit Tim10 (TIMM10) from Bos taurus (Bovine).